The chain runs to 224 residues: UPF0319 protein VC_1853 (224 aa).

The signal sequence occupies residues 1–21; the sequence is MKLNPLILGLLLSFSAGHSLA.

It belongs to the UPF0319 family.

This chain is UPF0319 protein VC_1853, found in Vibrio cholerae serotype O1 (strain ATCC 39315 / El Tor Inaba N16961).